A 346-amino-acid chain; its full sequence is D-alanine--D-alanine ligase (346 aa).

In terms of domain architecture, ATP-grasp spans lysine 133–lysine 327. Leucine 159–tyrosine 211 contributes to the ATP binding site. Mg(2+)-binding residues include aspartate 284, glutamate 296, and asparagine 298.

It belongs to the D-alanine--D-alanine ligase family. Mg(2+) is required as a cofactor. Mn(2+) serves as cofactor.

The protein resides in the cytoplasm. The enzyme catalyses 2 D-alanine + ATP = D-alanyl-D-alanine + ADP + phosphate + H(+). It functions in the pathway cell wall biogenesis; peptidoglycan biosynthesis. In terms of biological role, cell wall formation. The chain is D-alanine--D-alanine ligase from Campylobacter jejuni subsp. jejuni serotype O:2 (strain ATCC 700819 / NCTC 11168).